Reading from the N-terminus, the 262-residue chain is Small ribosomal subunit protein eS1 (262 aa).

Belongs to the eukaryotic ribosomal protein eS1 family. As to quaternary structure, component of the small ribosomal subunit. Mature ribosomes consist of a small (40S) and a large (60S) subunit. The 40S subunit contains about 33 different proteins and 1 molecule of RNA (18S). The 60S subunit contains about 49 different proteins and 3 molecules of RNA (25S, 5.8S and 5S).

The protein localises to the cytoplasm. In Plasmodium knowlesi (strain H), this protein is Small ribosomal subunit protein eS1.